The following is a 411-amino-acid chain: MTKLAYFECPTGIAGDMCLGALLDLGVPLSLLQDYFRRLDIEQEFELQVSAVHRQSQQATYVRVELGAEPGPPGKHQHSHHRHLPEIERLILSAGLPHQAERWSLDIFRNLALAEGKVHGIEPNRVHFHEVGATDAIVDIVGTCLGLHWLGVEEMFCSALPTGGGTVKAAHGKLSVPVPAVLQLWQTRQVPVYDNGIHKELVTPTGAAIATTLAQSFGPPPPLSLHQIGLGAGTLDLSLPNILRIWLGESAASPASGTHPETVTVLETQIDDLNPQAFGYVFDALFQVGALDVFTQAVGMKKSRPGILLTVICRPETVSACETVIFKETSTLGIRRSQQQRTALQREIKTIDTAYGPVQIKLAYHDQQLVNVQPEYEDCAQIAQTHHLSWQQVYQAALLAWYQQSEIIGVK.

The protein belongs to the LarC family.

In Acaryochloris marina (strain MBIC 11017), this protein is Putative nickel insertion protein.